The primary structure comprises 99 residues: uncharacterized protein (99 aa).

A helical transmembrane segment spans residues 6-26 (LVCSIVFILFILFYDLKIGTI). The LysM domain maps to 48–95 (KTVKVKPGDTVMSIVGSAGSPDDIVKDFEALNPNVKANAIQAGTAYKF).

It is found in the secreted. It localises to the cell wall. Its subcellular location is the membrane. This is an uncharacterized protein from Bacillus subtilis (strain 168).